A 263-amino-acid polypeptide reads, in one-letter code: Oxidoreductase tpcG (263 aa).

The protein belongs to the avfA family. As to expression, specifically expressed in conidia.

It participates in secondary metabolite biosynthesis. In terms of biological role, oxidoreductase; part of the gene cluster that mediates the biosynthesis of trypacidin, a mycotoxin with antiprotozoal activity and that plays a role in the infection process. The pathway begins with the synthesis of atrochrysone thioester by the polyketide synthase (PKS) tpcC. The atrochrysone carboxyl ACP thioesterase tpcB then breaks the thioester bond and releases the atrochrysone carboxylic acid from tpcC. The decarboxylase tpcK converts atrochrysone carboxylic acid to atrochrysone which is further reduced into emodin anthrone. The next step is performed by the emodin anthrone oxygenase tpcL that catalyzes the oxidation of emodinanthrone to emodin. Emodin O-methyltransferase encoded by tpcA catalyzes methylation of the 8-hydroxy group of emodin to form questin. Ring cleavage of questin by questin oxidase tpcI leads to desmethylsulochrin via several intermediates including questin epoxide. Another methylation step catalyzed by tpcM leads to the formation of sulochrin which is further converted to monomethylsulfochrin by tpcH. Finally, the tpcJ catalyzes the conversion of monomethylsulfochrin to trypacidin. Trypacidin is toxic for human pulmonary and bronchial epithelial cells by initiating the intracellular formation of nitric oxide (NO) and hydrogen peroxide (H(2)O(2)), thus triggering host necrotic cell death. The trypacidin pathway is also able to produce endocrocin via a distinct route from the endocrocin Enc pathway. The polypeptide is Oxidoreductase tpcG (Aspergillus fumigatus (strain ATCC MYA-4609 / CBS 101355 / FGSC A1100 / Af293) (Neosartorya fumigata)).